The sequence spans 36 residues: Photosystem I reaction center subunit VIII (36 aa).

A helical transmembrane segment spans residues Ser8 to Leu28.

This sequence belongs to the PsaI family.

The protein resides in the plastid. Its subcellular location is the chloroplast thylakoid membrane. Functionally, may help in the organization of the PsaL subunit. The sequence is that of Photosystem I reaction center subunit VIII from Solanum bulbocastanum (Wild potato).